The following is a 213-amino-acid chain: Na(+)-translocating NADH-quinone reductase subunit D (213 aa).

6 helical membrane passes run 21–41 (PLIAILGICSALAVTTTVKTA), 42–62 (ITMGLAVSFVTGCSSFFVSLL), 77–97 (IIISLFVIVIDQFLKAFFFNI), 101–121 (LSVFVGLIITNCIVMGRAESL), 131–151 (FLDGLASGLGYGWVLVFVSII), and 183–203 (FGLMVLAPSAFFLLGIMIWVV).

It belongs to the NqrDE/RnfAE family. Composed of six subunits; NqrA, NqrB, NqrC, NqrD, NqrE and NqrF.

It localises to the cell inner membrane. The catalysed reaction is a ubiquinone + n Na(+)(in) + NADH + H(+) = a ubiquinol + n Na(+)(out) + NAD(+). NQR complex catalyzes the reduction of ubiquinone-1 to ubiquinol by two successive reactions, coupled with the transport of Na(+) ions from the cytoplasm to the periplasm. NqrA to NqrE are probably involved in the second step, the conversion of ubisemiquinone to ubiquinol. This chain is Na(+)-translocating NADH-quinone reductase subunit D, found in Chlamydia felis (strain Fe/C-56) (Chlamydophila felis).